The chain runs to 600 residues: Aspartate--tRNA(Asp/Asn) ligase (600 aa).

Glu-183 contributes to the L-aspartate binding site. The segment at 207–210 (QLFK) is aspartate. Arg-229 provides a ligand contact to L-aspartate. ATP contacts are provided by residues 229–231 (RDE) and Gln-238. His-456 lines the L-aspartate pocket. Residue Glu-490 participates in ATP binding. Residue Arg-497 participates in L-aspartate binding. Position 542–545 (542–545 (GLDR)) interacts with ATP.

The protein belongs to the class-II aminoacyl-tRNA synthetase family. Type 1 subfamily. Homodimer.

It is found in the cytoplasm. It carries out the reaction tRNA(Asx) + L-aspartate + ATP = L-aspartyl-tRNA(Asx) + AMP + diphosphate. Aspartyl-tRNA synthetase with relaxed tRNA specificity since it is able to aspartylate not only its cognate tRNA(Asp) but also tRNA(Asn). Reaction proceeds in two steps: L-aspartate is first activated by ATP to form Asp-AMP and then transferred to the acceptor end of tRNA(Asp/Asn). The polypeptide is Aspartate--tRNA(Asp/Asn) ligase (Moorella thermoacetica (strain ATCC 39073 / JCM 9320)).